We begin with the raw amino-acid sequence, 270 residues long: 3-methyl-2-oxobutanoate hydroxymethyltransferase (270 aa).

Mg(2+) contacts are provided by D43 and D82. Residues 43-44 (DS), D82, and K112 each bind 3-methyl-2-oxobutanoate. E114 is a Mg(2+) binding site. E179 serves as the catalytic Proton acceptor.

Belongs to the PanB family. Homodecamer; pentamer of dimers. Requires Mg(2+) as cofactor.

The protein resides in the cytoplasm. The catalysed reaction is 3-methyl-2-oxobutanoate + (6R)-5,10-methylene-5,6,7,8-tetrahydrofolate + H2O = 2-dehydropantoate + (6S)-5,6,7,8-tetrahydrofolate. The protein operates within cofactor biosynthesis; (R)-pantothenate biosynthesis; (R)-pantoate from 3-methyl-2-oxobutanoate: step 1/2. In terms of biological role, catalyzes the reversible reaction in which hydroxymethyl group from 5,10-methylenetetrahydrofolate is transferred onto alpha-ketoisovalerate to form ketopantoate. This chain is 3-methyl-2-oxobutanoate hydroxymethyltransferase, found in Oceanobacillus iheyensis (strain DSM 14371 / CIP 107618 / JCM 11309 / KCTC 3954 / HTE831).